Here is a 148-residue protein sequence, read N- to C-terminus: Histone H2A-like 3 (148 aa).

The disordered stretch occupies residues D101–V128. Residues P111–M127 are compositionally biased toward acidic residues.

The protein belongs to the histone H2A family. The nucleosome is a histone octamer containing two molecules each of H2A, H2B, H3 and H4 assembled in one H3-H4 heterotetramer and two H2A-H2B heterodimers. The octamer wraps approximately 147 bp of DNA.

It localises to the nucleus. The protein resides in the chromosome. Its function is as follows. Core component of nucleosome. Nucleosomes wrap and compact DNA into chromatin, limiting DNA accessibility to the cellular machineries which require DNA as a template. Histones thereby play a central role in transcription regulation, DNA repair, DNA replication and chromosomal stability. DNA accessibility is regulated via a complex set of post-translational modifications of histones, also called histone code, and nucleosome remodeling. In Homo sapiens (Human), this protein is Histone H2A-like 3.